Here is a 445-residue protein sequence, read N- to C-terminus: MSNRKYFGTDGIRGRVGDAPITPDFVLKLGWAAGKVLARHGSRKIIIGKDTRISGYMLESALEAGLAAAGLSALFTGPMPTPAVAYLTRTFRAEAGIVISASHNPFYDNGIKFFSIDGTKLPDAVEEAIEAEMEKEISCVDSAELGKASRIVDAAGRYIEFCKATFPNELSLSELKIVVDCANGATYHIAPNVLRELGANVIAIGCEPNGVNINAEVGATDVRALQARVLAEKADLGIAFDGDGDRVIMVDHEGNKVDGDQIMYIIAREGLRQGQLRGGAVGTLMSNMGLELALKQLGIPFARAKVGDRYVLEKMQEKGWRIGAENSGHVILLDKTTTGDGIVAGLQVLAAMARNHMSLHDLCSGMKMFPQILVNVRYTAGSGDPLEHESVKAVTAEVEAALGSRGRVLLRKSGTEPLIRVMVEGEDEAQVTEFAHRIADAVKAV.

Ser102 serves as the catalytic Phosphoserine intermediate. Mg(2+) is bound by residues Ser102, Asp241, Asp243, and Asp245. At Ser102 the chain carries Phosphoserine.

The protein belongs to the phosphohexose mutase family. Mg(2+) serves as cofactor. Post-translationally, activated by phosphorylation.

The enzyme catalyses alpha-D-glucosamine 1-phosphate = D-glucosamine 6-phosphate. In terms of biological role, catalyzes the conversion of glucosamine-6-phosphate to glucosamine-1-phosphate. This Escherichia coli O127:H6 (strain E2348/69 / EPEC) protein is Phosphoglucosamine mutase.